A 366-amino-acid chain; its full sequence is MSTKQHSAKDELLYLNKAVVFGSGAFGTALAMVLSKKCREVCVWHMNEEEVRLVNEKRENVLFLKGVQLASNITFTSDVEKAYNGAEIILFVIPTQFLRGFFEKSGGNLIAYAKEKQVPVLVCTKGIERSTLKFPAEIIGEFLPSPLLSVLAGPSFAIEVATGVFTCVSIASADINVARRLQRIMSTGDRSFVCWATTDTVGCEVASAVKNVLAIGSGVANGLGMGLNARAALIMRGLLEIRDLTAALGGDGSAVFGLAGLGDLQLTCSSELSRNFTVGKKLGKGLPIEEIQRTSKAVAEGVATADPLMRLAKQLKVKMPLCHQIYEIVYKKKNPRDALADLLSCGLQDEGLPPLFKRSASTPSKL.

NAD(+) contacts are provided by residues 22-27 (GSGAFG), Phe97, Lys125, and Ala157. A substrate-binding site is contributed by Lys125. The active-site Proton acceptor is the Lys210. 3 residues coordinate NAD(+): Arg274, Val298, and Glu300. A substrate-binding site is contributed by 274 to 275 (RN). The Microbody targeting signal signature appears at 364-366 (SKL).

The protein belongs to the NAD-dependent glycerol-3-phosphate dehydrogenase family. Homodimer.

Its subcellular location is the glycosome. It catalyses the reaction sn-glycerol 3-phosphate + NAD(+) = dihydroxyacetone phosphate + NADH + H(+). This Leishmania mexicana protein is Glycerol-3-phosphate dehydrogenase [NAD(+)], glycosomal (GPD).